Reading from the N-terminus, the 208-residue chain is Uridine kinase (208 aa).

Residue 11–18 participates in ATP binding; the sequence is GGTGSGKS.

The protein belongs to the uridine kinase family.

The protein resides in the cytoplasm. The enzyme catalyses uridine + ATP = UMP + ADP + H(+). The catalysed reaction is cytidine + ATP = CMP + ADP + H(+). Its pathway is pyrimidine metabolism; CTP biosynthesis via salvage pathway; CTP from cytidine: step 1/3. It functions in the pathway pyrimidine metabolism; UMP biosynthesis via salvage pathway; UMP from uridine: step 1/1. In Clostridium novyi (strain NT), this protein is Uridine kinase.